A 414-amino-acid polypeptide reads, in one-letter code: Na(+)-translocating NADH-quinone reductase subunit B (414 aa).

4 helical membrane-spanning segments follow: residues 23–40, 56–76, 129–149, and 164–184; these read WFAL…PGLV, IMIM…YNAG, FLPI…LFCM, and ILFA…LGIT. Threonine 236 is modified (FMN phosphoryl threonine). 5 consecutive transmembrane segments (helical) span residues 268 to 288, 297 to 317, 325 to 345, 358 to 378, and 381 to 401; these read IPGS…AMIV, IIAG…VVGS, MPWH…FMAT, WWYG…NPAY, and GMML…HVVI.

This sequence belongs to the NqrB/RnfD family. Composed of six subunits; NqrA, NqrB, NqrC, NqrD, NqrE and NqrF. Requires FMN as cofactor.

It is found in the cell inner membrane. The enzyme catalyses a ubiquinone + n Na(+)(in) + NADH + H(+) = a ubiquinol + n Na(+)(out) + NAD(+). Functionally, NQR complex catalyzes the reduction of ubiquinone-1 to ubiquinol by two successive reactions, coupled with the transport of Na(+) ions from the cytoplasm to the periplasm. NqrA to NqrE are probably involved in the second step, the conversion of ubisemiquinone to ubiquinol. This is Na(+)-translocating NADH-quinone reductase subunit B from Vibrio parahaemolyticus serotype O3:K6 (strain RIMD 2210633).